The sequence spans 445 residues: tRNA modification GTPase MnmE (445 aa).

Positions 24, 81, and 121 each coordinate (6S)-5-formyl-5,6,7,8-tetrahydrofolate. The TrmE-type G domain maps to 218-369; it reads GLTVVIAGPP…LLEALVGFAR (152 aa). GTP-binding positions include 228 to 233, 247 to 253, 272 to 275, and 350 to 352; these read NAGKST, SPHAGTT, DTAG, and SAR. The Mg(2+) site is built by serine 232 and threonine 253. (6S)-5-formyl-5,6,7,8-tetrahydrofolate is bound at residue lysine 445.

Belongs to the TRAFAC class TrmE-Era-EngA-EngB-Septin-like GTPase superfamily. TrmE GTPase family. Homodimer. Heterotetramer of two MnmE and two MnmG subunits. K(+) is required as a cofactor.

The protein resides in the cytoplasm. Exhibits a very high intrinsic GTPase hydrolysis rate. Involved in the addition of a carboxymethylaminomethyl (cmnm) group at the wobble position (U34) of certain tRNAs, forming tRNA-cmnm(5)s(2)U34. The protein is tRNA modification GTPase MnmE of Bradyrhizobium sp. (strain BTAi1 / ATCC BAA-1182).